Here is a 578-residue protein sequence, read N- to C-terminus: MGNCCSDVASGAGATAGVGGSGSSAALGATNDALDYYLKSKGFNGLFSQIELSFSASNLRDRDVLSKSDPMVVVYQKEKDATLSEVFRSEVVLNSLAPKWIKKFIVAYHFETVQTLVFRVYDVDTKFQNSREEMLKLDEQQFLGEATCALSEIITKSTRTSTLELKRKDGFAPQAQPHHGKLIIHAEESLASKISTEIVFRCSNLESKDLFSKSDPFLVVSKIVEHGTPIPVSKTEVRKNDLNPIWKPVFLSVQQVGSKDSPVIIECSDFNSNGKHSLIGKVQKSLSDLEKLHLAGQGINFSLPTGAGQNKVLKSQLFVDKFTETVHHTFLEYLASGFELNFMVAIDFTASNGNPRLPDSLHYIDPSGRLNAYQRAIMDVGEVLQFYDSDKRFPAWGFGARPIDAPVSHCFNLNGSSSYSEVDGIQGIMTSYTSALFNVSLAGPTLFGPVINAAAMIASASLAQGSRKYYVLLIITDGVITDLQETKDALVSASDLPLSILIVGVGGADFKEMEILDADKGERLESSSGRLASRDIVQFVALRDVQYGEISVVQALLAELPSQFLTYMRIRNMKPIPP.

Gly2 is lipidated: N-myristoyl glycine. C2 domains are found at residues 26–163 and 176–303; these read ALGA…TSTL and QPHH…NFSL. Asp63, Asp69, Asp122, and Asp124 together coordinate Ca(2+). The VWFA domain maps to 341 to 560; it reads NFMVAIDFTA…SVVQALLAEL (220 aa).

Belongs to the copine family. Interacts (via VWA domain) with BAP1 and BAP2. Interacts with HSP70-1 and HSP70-2. The cofactor is Ca(2+). Post-translationally, based on mass spectrometry analysis, the N-peptide must be modified and there might be additional modifications other than myristoylation. In terms of tissue distribution, expressed in roots and flowers and, at higher levels, in leaves and stems. Strongly expressed in growing tissues. Not detected in green siliques.

The protein localises to the cell membrane. Its function is as follows. Negative regulator of cell death and defense responses. Negative regulator of several R genes, including SNC1. May have effects in promoting growth and development. May function in membrane trafficking and in fusion of vesicles with plasma membrane at low temperature. Exhibits calcium-dependent phospholipid binding properties. The protein is Protein BONZAI 1 (BON1) of Arabidopsis thaliana (Mouse-ear cress).